Here is a 124-residue protein sequence, read N- to C-terminus: Fluoride-specific ion channel FluC (124 aa).

Transmembrane regions (helical) follow at residues 5 to 25, 37 to 57, 69 to 89, and 99 to 119; these read ILAV…AGTW, ATLA…GLFL, GLIV…LDTL, and LALG…WAGL. Na(+) is bound by residues Gly-76 and Thr-79.

It belongs to the fluoride channel Fluc/FEX (TC 1.A.43) family.

The protein resides in the cell inner membrane. It carries out the reaction fluoride(in) = fluoride(out). Its activity is regulated as follows. Na(+) is not transported, but it plays an essential structural role and its presence is essential for fluoride channel function. Fluoride-specific ion channel. Important for reducing fluoride concentration in the cell, thus reducing its toxicity. This is Fluoride-specific ion channel FluC from Pseudomonas syringae pv. tomato (strain ATCC BAA-871 / DC3000).